A 139-amino-acid polypeptide reads, in one-letter code: Hydrogenase maturation factor HypA (139 aa).

His2 lines the Ni(2+) pocket. Positions 73, 76, 110, and 113 each coordinate Zn(2+).

This sequence belongs to the HypA/HybF family.

In terms of biological role, involved in the maturation of [NiFe] hydrogenases. Required for nickel insertion into the metal center of the hydrogenase. The sequence is that of Hydrogenase maturation factor HypA from Thermococcus onnurineus (strain NA1).